Consider the following 237-residue polypeptide: Listeriolysin regulatory protein (237 aa).

Residues 137–212 form the HTH crp-type domain; the sequence is NGKLGSICGQ…NSCFYVQNLD (76 aa).

In terms of biological role, positively regulates expression of listeriolysin, of 1-phosphadidylinositol phosphodiesterase (PI-PLC) and other virulence factors. This Listeria monocytogenes serovar 1/2a (strain ATCC BAA-679 / EGD-e) protein is Listeriolysin regulatory protein (prfA).